The primary structure comprises 983 residues: Kinesin-like protein KIN-14I (983 aa).

In terms of domain architecture, Calponin-homology (CH) spans 44-166 (ASRRYEAANW…CVLAIKSYDE (123 aa)). Composition is skewed to polar residues over residues 203 to 214 (SLSRTSSINNEK) and 278 to 287 (ESTSSQNNRS). Disordered regions lie at residues 203-227 (SLSRTSSINNEKAPSENDSNKLSSP) and 276-295 (PRESTSSQNNRSFLKPLGER). The Kinesin motor domain maps to 399–724 (SIRVYCRVRP…LKFAERVATV (326 aa)). Position 481-488 (481-488 (GQTGSGKT)) interacts with ATP. Residues 731–758 (VNNDTSDVKELKEQIATLKAALARKEAE) adopt a coiled-coil conformation. Disordered stretches follow at residues 802–824 (TVNSPPWPPVASPGQAYREDDRS) and 921–983 (TRSN…NARH). The span at 939–951 (SPQSRNNSNNTVS) shows a compositional bias: polar residues.

Belongs to the TRAFAC class myosin-kinesin ATPase superfamily. Kinesin family. KIN-14 subfamily.

The protein is Kinesin-like protein KIN-14I of Arabidopsis thaliana (Mouse-ear cress).